The primary structure comprises 289 residues: Serine/threonine-protein phosphatase Pgam5, mitochondrial (289 aa).

It belongs to the phosphoglycerate mutase family. BPG-dependent PGAM subfamily. Interacts with Pk92B/ASK1.

The protein localises to the mitochondrion outer membrane. It carries out the reaction O-phospho-L-seryl-[protein] + H2O = L-seryl-[protein] + phosphate. The catalysed reaction is O-phospho-L-threonyl-[protein] + H2O = L-threonyl-[protein] + phosphate. Functionally, displays phosphatase activity for serine/threonine residues, and dephosphorylates and activates Pk92B kinase. Has apparently no phosphoglycerate mutase activity. The polypeptide is Serine/threonine-protein phosphatase Pgam5, mitochondrial (Drosophila yakuba (Fruit fly)).